Consider the following 158-residue polypeptide: 6,7-dimethyl-8-ribityllumazine synthase 2 (158 aa).

Residues W20, 54-56, and 78-80 contribute to the 5-amino-6-(D-ribitylamino)uracil site; these read AYE and FVI. The active-site Proton donor is the R86. S111 serves as a coordination point for 5-amino-6-(D-ribitylamino)uracil. (2S)-2-hydroxy-3-oxobutyl phosphate is bound at residue H125.

It belongs to the DMRL synthase family. In terms of assembly, homodecamer, arranged as a dimer of pentamers.

The protein localises to the cytoplasm. It catalyses the reaction (2S)-2-hydroxy-3-oxobutyl phosphate + 5-amino-6-(D-ribitylamino)uracil = 6,7-dimethyl-8-(1-D-ribityl)lumazine + phosphate + 2 H2O + H(+). It functions in the pathway cofactor biosynthesis; riboflavin biosynthesis; riboflavin from 2-hydroxy-3-oxobutyl phosphate and 5-amino-6-(D-ribitylamino)uracil: step 1/2. Its function is as follows. Catalyzes the formation of 6,7-dimethyl-8-ribityllumazine by condensation of 5-amino-6-(D-ribitylamino)uracil with 3,4-dihydroxy-2-butanone 4-phosphate. This is the penultimate step in the biosynthesis of riboflavin. The isozyme RibH2 but not RibH1 is essential for Brucella intracellular survival and replication inside macrophages or in mice. Displays low catalytic activity in comparison with the isozyme RibH1. Is a highly immunogenic protein. Activates dendritic cells (DCs) in vitro, increasing the levels of costimulatory molecules and the secretion of pro-inflammatory cytokines, and recruits DCs, B cells and CD8+ T cells in vivo, both effects in a TLR4-dependent manner. Induces the cross presentation of covalently attached peptides and generates a strong and long-lasting humoral immune response without adjuvants; TLR4 signaling is necessary for the induction of the cytotoxic response but not for antigen cross presentation. Elicits a TLR4-mediated protective response against B16 melanoma in mice, slowing tumor growth and prolonging mice survival. The protein is 6,7-dimethyl-8-ribityllumazine synthase 2 of Brucella abortus (strain 2308).